Consider the following 102-residue polypeptide: Small ribosomal subunit protein uS10 (102 aa).

Belongs to the universal ribosomal protein uS10 family. Part of the 30S ribosomal subunit.

Its function is as follows. Involved in the binding of tRNA to the ribosomes. This is Small ribosomal subunit protein uS10 from Nitrosopumilus maritimus (strain SCM1).